The sequence spans 178 residues: Large ribosomal subunit protein bL25 (178 aa).

It belongs to the bacterial ribosomal protein bL25 family. CTC subfamily. Part of the 50S ribosomal subunit; part of the 5S rRNA/L5/L18/L25 subcomplex. Contacts the 5S rRNA. Binds to the 5S rRNA independently of L5 and L18.

Functionally, this is one of the proteins that binds to the 5S RNA in the ribosome where it forms part of the central protuberance. In Sulfurimonas denitrificans (strain ATCC 33889 / DSM 1251) (Thiomicrospira denitrificans (strain ATCC 33889 / DSM 1251)), this protein is Large ribosomal subunit protein bL25.